A 273-amino-acid chain; its full sequence is NAD kinase (273 aa).

The active-site Proton acceptor is the Asp53. NAD(+) is bound by residues 53-54 (DG), Arg58, 128-129 (NE), Asp157, 168-173 (TAYNFS), and Ala192.

It belongs to the NAD kinase family. Requires a divalent metal cation as cofactor.

The protein localises to the cytoplasm. It catalyses the reaction NAD(+) + ATP = ADP + NADP(+) + H(+). In terms of biological role, involved in the regulation of the intracellular balance of NAD and NADP, and is a key enzyme in the biosynthesis of NADP. Catalyzes specifically the phosphorylation on 2'-hydroxyl of the adenosine moiety of NAD to yield NADP. This Finegoldia magna (strain ATCC 29328 / DSM 20472 / WAL 2508) (Peptostreptococcus magnus) protein is NAD kinase.